The following is a 139-amino-acid chain: Large ribosomal subunit protein uL13 (139 aa).

It belongs to the universal ribosomal protein uL13 family. Part of the 50S ribosomal subunit.

In terms of biological role, this protein is one of the early assembly proteins of the 50S ribosomal subunit, although it is not seen to bind rRNA by itself. It is important during the early stages of 50S assembly. This is Large ribosomal subunit protein uL13 from Aliarcobacter butzleri (strain RM4018) (Arcobacter butzleri).